The sequence spans 933 residues: Isoleucine--tRNA ligase (933 aa).

Residues 57–67 (PYANGNIHVGH) carry the 'HIGH' region motif. Glu554 is a binding site for L-isoleucyl-5'-AMP. Residues 595–599 (KMSKS) carry the 'KMSKS' region motif. Lys598 contributes to the ATP binding site.

It belongs to the class-I aminoacyl-tRNA synthetase family. IleS type 1 subfamily. As to quaternary structure, monomer.

Its subcellular location is the cytoplasm. The catalysed reaction is tRNA(Ile) + L-isoleucine + ATP = L-isoleucyl-tRNA(Ile) + AMP + diphosphate. In terms of biological role, catalyzes the attachment of isoleucine to tRNA(Ile). As IleRS can inadvertently accommodate and process structurally similar amino acids such as valine, to avoid such errors it has two additional distinct tRNA(Ile)-dependent editing activities. One activity is designated as 'pretransfer' editing and involves the hydrolysis of activated Val-AMP. The other activity is designated 'posttransfer' editing and involves deacylation of mischarged Val-tRNA(Ile). The protein is Isoleucine--tRNA ligase of Streptococcus pyogenes serotype M18 (strain MGAS8232).